Here is a 134-residue protein sequence, read N- to C-terminus: Phosphoribosyl-AMP cyclohydrolase (134 aa).

Aspartate 80 is a binding site for Mg(2+). Cysteine 81 serves as a coordination point for Zn(2+). Residues aspartate 82 and aspartate 84 each contribute to the Mg(2+) site. 2 residues coordinate Zn(2+): cysteine 98 and cysteine 105.

It belongs to the PRA-CH family. In terms of assembly, homodimer. The cofactor is Mg(2+). Requires Zn(2+) as cofactor.

It is found in the cytoplasm. It catalyses the reaction 1-(5-phospho-beta-D-ribosyl)-5'-AMP + H2O = 1-(5-phospho-beta-D-ribosyl)-5-[(5-phospho-beta-D-ribosylamino)methylideneamino]imidazole-4-carboxamide. Its pathway is amino-acid biosynthesis; L-histidine biosynthesis; L-histidine from 5-phospho-alpha-D-ribose 1-diphosphate: step 3/9. Functionally, catalyzes the hydrolysis of the adenine ring of phosphoribosyl-AMP. In Janthinobacterium sp. (strain Marseille) (Minibacterium massiliensis), this protein is Phosphoribosyl-AMP cyclohydrolase.